The primary structure comprises 913 residues: Sterol uptake control protein 2 (913 aa).

A DNA-binding region (zn(2)-C6 fungal-type) is located at residues 50–80 (GCDNCKRRRVKCDEGKPACRKCTNMKLECQY). 2 disordered regions span residues 103 to 173 (GSVE…SMGL) and 216 to 258 (GNMG…LAGS). At threonine 122 the chain carries Phosphothreonine. The span at 150 to 164 (SESEEKSSAPIEDKN) shows a compositional bias: basic and acidic residues. Low complexity predominate over residues 222–241 (QLQQQQQVQQQSQPQTQAQQ). A coiled-coil region spans residues 303 to 346 (QQHQQVQLQQYQQLRQEQHQQVQQQQQEQLQQYQQHFLQQQQQV). Disordered regions lie at residues 347–385 (LLQQEQQPNDEEGGVQEENSKKVKEGPLQSQTSETTLNS) and 453–489 (MQEHHERAAASVKENDGQLSDTKSPAPSNNAQGGSAS). A compositionally biased stretch (polar residues) spans 374 to 385 (LQSQTSETTLNS). Residues 440–472 (ATKASNAEEALANMQEHHERAAASVKENDGQLS) adopt a coiled-coil conformation. Residues 454–468 (QEHHERAAASVKEND) are compositionally biased toward basic and acidic residues. Residues 469–487 (GQLSDTKSPAPSNNAQGGS) are compositionally biased toward polar residues. Serine 519 is subject to Phosphoserine. Positions 552–562 (EPTISLQTSQT) are enriched in polar residues. Positions 552–571 (EPTISLQTSQTENEDDASRQ) are disordered.

It is found in the nucleus. Its function is as follows. Transcription factor that is involved in activation of anaerobic genes such as DAN/TIR cell wall mannoprotein genes and YML083c. Appears to bind to anaerobic response elements (AR1) with the consensus sequence 5'-TCGTTYAG-3' present in the promoter regions of DAN/TIR genes. Involved in sterol uptake and regulation of the sterol biosynthesis. Binds to sterol regulatory elements (SRE) with the consensus sequence 5'-TCGTATA-3' present in ERG2 and ERG3 promoters. May be involved in down-regulation of CWP2 during anaerobic adaptation. This chain is Sterol uptake control protein 2 (UPC2), found in Saccharomyces cerevisiae (strain ATCC 204508 / S288c) (Baker's yeast).